Reading from the N-terminus, the 239-residue chain is Probable transcriptional regulatory protein BC_0539 (239 aa).

It belongs to the TACO1 family. YeeN subfamily.

It localises to the cytoplasm. This Bacillus cereus (strain ATCC 14579 / DSM 31 / CCUG 7414 / JCM 2152 / NBRC 15305 / NCIMB 9373 / NCTC 2599 / NRRL B-3711) protein is Probable transcriptional regulatory protein BC_0539.